The chain runs to 505 residues: ATP synthase subunit alpha (505 aa).

ATP is bound at residue 169–176 (GDRQTGKT).

It belongs to the ATPase alpha/beta chains family. F-type ATPases have 2 components, CF(1) - the catalytic core - and CF(0) - the membrane proton channel. CF(1) has five subunits: alpha(3), beta(3), gamma(1), delta(1), epsilon(1). CF(0) has three main subunits: a(1), b(2) and c(9-12). The alpha and beta chains form an alternating ring which encloses part of the gamma chain. CF(1) is attached to CF(0) by a central stalk formed by the gamma and epsilon chains, while a peripheral stalk is formed by the delta and b chains.

The protein resides in the cell membrane. The enzyme catalyses ATP + H2O + 4 H(+)(in) = ADP + phosphate + 5 H(+)(out). Functionally, produces ATP from ADP in the presence of a proton gradient across the membrane. The alpha chain is a regulatory subunit. This chain is ATP synthase subunit alpha, found in Alkaliphilus metalliredigens (strain QYMF).